Consider the following 580-residue polypeptide: Anaphase-promoting complex subunit 7 (580 aa).

TPR repeat units follow at residues 50 to 83, 107 to 140, 141 to 175, 253 to 286, 321 to 354, 356 to 388, 390 to 421, 422 to 456, 458 to 490, and 491 to 523; these read IISF…LFKV, YELK…SRGL, DTHL…CPLC, VLEK…DPYY, AETW…KESH, FAHS…SKNI, TARE…SPDY, SKTM…SPHC, DTVL…QETD, and LMHT…NPQY. The disordered stretch occupies residues 539–580; sequence GIDPDQELDQENDDDDQEEGEGENDQEENDDDDNDDDDEYIS. The segment covering 542–580 has biased composition (acidic residues); sequence PDQELDQENDDDDQEEGEGENDQEENDDDDNDDDDEYIS.

The protein belongs to the APC7 family. In terms of assembly, the APC/C is composed of at least 13 subunits that stay tightly associated throughout the cell cycle: anapc1, anapc2, anapc3, anapc4, anapc5, anapc6, anapc7, anapc8, anapc10, anapc11, cdc20, cdc26 and cdh1.

The protein resides in the nucleus. The protein operates within protein modification; protein ubiquitination. Its function is as follows. Component of the anaphase promoting complex/cyclosome (APC/C), a cell cycle-regulated E3 ubiquitin-protein ligase complex that controls progression through mitosis and the G1 phase of the cell cycle. In Dictyostelium discoideum (Social amoeba), this protein is Anaphase-promoting complex subunit 7 (anapc7).